The chain runs to 341 residues: Basic membrane protein B (341 aa).

An N-terminal signal peptide occupies residues 1–14 (MRIVIFIFGILLTS). Cys-15 carries the N-palmitoyl cysteine lipid modification. A lipid anchor (S-diacylglycerol cysteine) is attached at Cys-15.

The protein belongs to the BMP lipoprotein family. As to quaternary structure, monomer.

The protein localises to the cell inner membrane. In terms of biological role, may be part of an ABC-type nucleoside uptake system involved in the purine salvage pathway. This Borreliella burgdorferi (strain ATCC 35210 / DSM 4680 / CIP 102532 / B31) (Borrelia burgdorferi) protein is Basic membrane protein B (bmpB).